Reading from the N-terminus, the 322-residue chain is AA9 family lytic polysaccharide monooxygenase A (322 aa).

Residues 1-15 form the signal peptide; sequence MKVLSLLAAASAASA. Histidine 16 and histidine 96 together coordinate Cu(2+). Cystine bridges form between cysteine 54/cysteine 182 and cysteine 152/cysteine 237. 2 residues coordinate O2: histidine 168 and glutamine 177. 2 O-linked (Man...) threonine glycosylation sites follow: threonine 228 and threonine 236. Residues 286–322 enclose the CBM1 domain; sequence CTAAQWAQCGGMGFSGCTTCASPYTCKKMNDYYSQCS.

Belongs to the polysaccharide monooxygenase AA9 family. Cu(2+) is required as a cofactor.

The protein resides in the secreted. The catalysed reaction is [(1-&gt;4)-beta-D-glucosyl]n+m + reduced acceptor + O2 = 4-dehydro-beta-D-glucosyl-[(1-&gt;4)-beta-D-glucosyl]n-1 + [(1-&gt;4)-beta-D-glucosyl]m + acceptor + H2O.. Its function is as follows. Lytic polysaccharide monooxygenase (LPMO) that depolymerizes crystalline and amorphous polysaccharides via the oxidation of scissile alpha- or beta-(1-4)-glycosidic bonds, yielding C4 oxidation products. Catalysis by LPMOs requires the reduction of the active-site copper from Cu(II) to Cu(I) by a reducing agent and H(2)O(2) or O(2) as a cosubstrate. Active on tamarind xyloglucan and konjac glucomannan. This Neurospora crassa (strain ATCC 24698 / 74-OR23-1A / CBS 708.71 / DSM 1257 / FGSC 987) protein is AA9 family lytic polysaccharide monooxygenase A (gh61-1).